The primary structure comprises 738 residues: Conserved oligomeric Golgi complex subunit 4 (738 aa).

This sequence belongs to the COG4 family. Component of the conserved oligomeric Golgi complex which is composed of eight different subunits and is required for normal Golgi morphology and localization. Interacts with COG2 and COG3.

It is found in the golgi apparatus membrane. In terms of biological role, required for normal Golgi function. This Arabidopsis thaliana (Mouse-ear cress) protein is Conserved oligomeric Golgi complex subunit 4.